A 307-amino-acid chain; its full sequence is MAESTAGSEAEQDGMTPVRPVEAELLVVTGMSGAGRSTAADALEDHGWYVVENLPPQMLGTLAELVSHAPQSIPKLAVVVDVRSTALFADIRAALKTLEASGVTFRVLFLDANDDVLVRRFEQGRRPHPLQEGGRILDGIASERDLLHELRDSADIVLDTSEFNVHALATAITELFSETGPVALRLNVMSFGFKYGLPVDANFVVDARFIPNPHWVPQLRPHTGLDKDVSDYVLEAEGVKSFVDRYVLAIEPVLDGYRRENKHYATIAVGCTGGKHRSVAVAMELSKKLAQYPRVTVTTTHRDLGRE.

30-37 (GMSGAGRS) is an ATP binding site. Residue 81 to 84 (DVRS) participates in GTP binding.

The protein belongs to the RapZ-like family.

Functionally, displays ATPase and GTPase activities. The sequence is that of Nucleotide-binding protein Arth_2083 from Arthrobacter sp. (strain FB24).